Reading from the N-terminus, the 360-residue chain is Geranylgeranyl pyrophosphate synthase 9, chloroplastic (360 aa).

Residues 1 to 39 (MATTVHLSSSSLFSQSRGRRDNSISSVKSLRKRTVLSLS) constitute a chloroplast transit peptide. The isopentenyl diphosphate site is built by lysine 106, arginine 109, and histidine 138. Aspartate 145 and aspartate 151 together coordinate Mg(2+). Position 156 (arginine 156) interacts with dimethylallyl diphosphate. Arginine 157 is a binding site for isopentenyl diphosphate. The dimethylallyl diphosphate site is built by lysine 245, threonine 246, glutamine 283, lysine 300, and lysine 310.

It belongs to the FPP/GGPP synthase family. As to quaternary structure, monomer. No interactions with GGR. Requires Mg(2+) as cofactor.

Its subcellular location is the plastid. It is found in the chloroplast. The enzyme catalyses isopentenyl diphosphate + dimethylallyl diphosphate = (2E)-geranyl diphosphate + diphosphate. It carries out the reaction isopentenyl diphosphate + (2E)-geranyl diphosphate = (2E,6E)-farnesyl diphosphate + diphosphate. It catalyses the reaction isopentenyl diphosphate + (2E,6E)-farnesyl diphosphate = (2E,6E,10E)-geranylgeranyl diphosphate + diphosphate. It participates in isoprenoid biosynthesis; farnesyl diphosphate biosynthesis; farnesyl diphosphate from geranyl diphosphate and isopentenyl diphosphate: step 1/1. Its pathway is isoprenoid biosynthesis; geranyl diphosphate biosynthesis; geranyl diphosphate from dimethylallyl diphosphate and isopentenyl diphosphate: step 1/1. It functions in the pathway isoprenoid biosynthesis; geranylgeranyl diphosphate biosynthesis; geranylgeranyl diphosphate from farnesyl diphosphate and isopentenyl diphosphate: step 1/1. In terms of biological role, catalyzes the trans-addition of the three molecules of IPP onto DMAPP to form geranylgeranyl pyrophosphate. This chain is Geranylgeranyl pyrophosphate synthase 9, chloroplastic (GGPPS9), found in Arabidopsis thaliana (Mouse-ear cress).